Here is a 457-residue protein sequence, read N- to C-terminus: UDP-N-acetylmuramate--L-alanine ligase (457 aa).

112–118 is a binding site for ATP; the sequence is GAHGKTS.

This sequence belongs to the MurCDEF family.

It localises to the cytoplasm. The enzyme catalyses UDP-N-acetyl-alpha-D-muramate + L-alanine + ATP = UDP-N-acetyl-alpha-D-muramoyl-L-alanine + ADP + phosphate + H(+). Its pathway is cell wall biogenesis; peptidoglycan biosynthesis. Its function is as follows. Cell wall formation. The sequence is that of UDP-N-acetylmuramate--L-alanine ligase from Desulfosudis oleivorans (strain DSM 6200 / JCM 39069 / Hxd3) (Desulfococcus oleovorans).